A 341-amino-acid chain; its full sequence is S-adenosylmethionine:tRNA ribosyltransferase-isomerase (341 aa).

It belongs to the QueA family. In terms of assembly, monomer.

Its subcellular location is the cytoplasm. The enzyme catalyses 7-aminomethyl-7-carbaguanosine(34) in tRNA + S-adenosyl-L-methionine = epoxyqueuosine(34) in tRNA + adenine + L-methionine + 2 H(+). The protein operates within tRNA modification; tRNA-queuosine biosynthesis. In terms of biological role, transfers and isomerizes the ribose moiety from AdoMet to the 7-aminomethyl group of 7-deazaguanine (preQ1-tRNA) to give epoxyqueuosine (oQ-tRNA). The sequence is that of S-adenosylmethionine:tRNA ribosyltransferase-isomerase from Thermoanaerobacter sp. (strain X514).